A 138-amino-acid chain; its full sequence is Ribulose bisphosphate carboxylase small subunit (138 aa).

It belongs to the RuBisCO small chain family. As to quaternary structure, heterohexadecamer of 8 large and 8 small subunits.

Its subcellular location is the plastid. It is found in the chloroplast. Functionally, ruBisCO catalyzes two reactions: the carboxylation of D-ribulose 1,5-bisphosphate, the primary event in carbon dioxide fixation, as well as the oxidative fragmentation of the pentose substrate in the photorespiration process. Both reactions occur simultaneously and in competition at the same active site. Although the small subunit is not catalytic it is essential for maximal activity. The protein is Ribulose bisphosphate carboxylase small subunit of Porphyra purpurea (Red seaweed).